The primary structure comprises 386 residues: Trichocyst matrix protein T2-A (386 aa).

A signal peptide spans Met-1–Ala-19. A propeptide spanning residues Asp-20–Gly-48 is cleaved from the precursor. The stretch at Leu-51–Lys-154 forms a coiled coil. Positions Lys-184 to Gln-238 are excised as a propeptide. The stretch at Ser-293 to Asp-332 forms a coiled coil.

Belongs to the TMP family.

It is found in the trichocyst. In terms of biological role, structural protein that crystallize inside the trichocyst matrix. The protein is Trichocyst matrix protein T2-A (T2A) of Paramecium tetraurelia.